Consider the following 438-residue polypeptide: Glutaryl-CoA dehydrogenase, mitochondrial (438 aa).

The N-terminal 44 residues, 1-44, are a transit peptide targeting the mitochondrion; sequence MALRGVSVQLLSRVPGLRVFRTWVSSAAQTEKVGRTQSQLAKSS. Substrate contacts are provided by residues 138-139 and S186; that span reads RS. Residues 177 to 186, S186, and 212 to 214 contribute to the FAD site; these read FGLTEPNSGS and WIT. At K240 the chain carries N6-acetyllysine. Residue 287 to 294 participates in substrate binding; sequence FGCLNNGR. FAD is bound by residues R319, Q330, and 387–391; that span reads DMLGG. The Proton acceptor role is filled by E414. Substrate is bound at residue G415. FAD-binding positions include T416, 416–418, and F434; that span reads THD.

The protein belongs to the acyl-CoA dehydrogenase family. In terms of assembly, homotetramer. The cofactor is FAD.

The protein localises to the mitochondrion matrix. The catalysed reaction is glutaryl-CoA + oxidized [electron-transfer flavoprotein] + 2 H(+) = (2E)-butenoyl-CoA + reduced [electron-transfer flavoprotein] + CO2. It participates in amino-acid metabolism; lysine degradation. The protein operates within amino-acid metabolism; tryptophan metabolism. Catalyzes the oxidative decarboxylation of glutaryl-CoA to crotonyl-CoA and CO(2) in the degradative pathway of L-lysine, L-hydroxylysine, and L-tryptophan metabolism. It uses electron transfer flavoprotein as its electron acceptor. The polypeptide is Glutaryl-CoA dehydrogenase, mitochondrial (GCDH) (Macaca fascicularis (Crab-eating macaque)).